Consider the following 528-residue polypeptide: Beta-hexosaminidase subunit alpha (528 aa).

Positions 1–22 (MAGCRLWVSLLLAAALACLATA) are cleaved as a signal peptide. A propeptide spanning residues 23–88 (LWPWPQYIQT…PRPSFSNKQQ (66 aa)) is cleaved from the precursor. Cys58 and Cys104 are joined by a disulfide. 3 N-linked (GlcNAc...) asparagine glycosylation sites follow: Asn115, Asn157, and Asn295. A disulfide bridge connects residues Cys277 and Cys328. Residue Glu323 is the Proton donor of the active site. The critical for hydrolysis GM2 gangliosides stretch occupies residues 422–423 (NR). Residue Asn487 is glycosylated (N-linked (GlcNAc...) asparagine). The cysteines at positions 504 and 521 are disulfide-linked.

Belongs to the glycosyl hydrolase 20 family. There are 3 beta-hexosaminidase isozymes: isozyme A (hexosaminidase A) is a heterodimer composed of one subunit alpha and one subunit beta (chain A and B); isozyme B (hexosaminidase B) is a homodimer of two beta subunits (two chains A and B); isozyme S (hexosaminidase S) is a homodimer of two alpha subunits. The composition of the dimer (isozyme A versus isozyme S) has a significant effect on the substrate specificity of the alpha subunit active site. As to expression, ubiquitous. Most abundant in testis, adrenal, epididymis and heart. Low levels seen in the liver.

Its subcellular location is the lysosome. It catalyses the reaction Hydrolysis of terminal non-reducing N-acetyl-D-hexosamine residues in N-acetyl-beta-D-hexosaminides.. It carries out the reaction N-acetyl-beta-D-galactosaminyl-(1-&gt;4)-beta-D-3-sulfogalactosyl-(1-&gt;4)-beta-D-glucosyl-(1&lt;-&gt;1')-ceramide + H2O = a beta-D-3-sulfogalactosyl-(1-&gt;4)-beta-D-glucosyl-(1&lt;-&gt;1')-ceramide + N-acetyl-beta-D-galactosamine. The catalysed reaction is a ganglioside GM2 (d18:1(4E)) + H2O = a ganglioside GM3 (d18:1(4E)) + N-acetyl-beta-D-galactosamine. The enzyme catalyses a ganglioside GM2 + H2O = a ganglioside GM3 + N-acetyl-beta-D-galactosamine. It catalyses the reaction beta-D-GalNAc-(1-&gt;4)-alpha-L-IdoA-(1-&gt;3)-beta-D-GalNAc-4-sulfate-(1-&gt;4)-alpha-L-IdoA-(1-&gt;3)-D-GalNAc-4-sulfate + H2O = alpha-L-IdoA-(1-&gt;3)-beta-D-GalNAc-4-sulfate-(1-&gt;4)-alpha-L-IdoA-(1-&gt;3)-D-GalNAc-4-sulfate + N-acetyl-D-galactosamine. It carries out the reaction N-acetyl-beta-D-6-sulfogalactosaminyl-(1-&gt;4)-alpha-L-iduronyl-(1-&gt;3)-N-acetyl-D-6-sulfogalactosamine + H2O = alpha-L-iduronyl-(1-&gt;3)-N-acetyl-D-6-sulfogalactosamine + N-acetyl-D-6-sulfogalactosamine. Addition of GM2A stimulates the hydrolysis of sulfated glycosphingolipid SM2 and the ganglioside GM2. Hydrolyzes the non-reducing end N-acetyl-D-hexosamine and/or sulfated N-acetyl-D-hexosamine of glycoconjugates, such as the oligosaccharide moieties from proteins and neutral glycolipids, or from certain mucopolysaccharides. The isozyme S is as active as the isozyme A on the anionic bis-sulfated glycans, the chondroitin-6-sulfate trisaccharide (C6S-3), and the dermatan sulfate pentasaccharide, and the sulfated glycosphingolipid SM2. The isozyme B does not hydrolyze each of these substrates, however hydrolyzes efficiently neutral oligosaccharide. Only the isozyme A is responsible for the degradation of GM2 gangliosides in the presence of GM2A. In Mus musculus (Mouse), this protein is Beta-hexosaminidase subunit alpha.